We begin with the raw amino-acid sequence, 1171 residues long: ATP-dependent helicase/deoxyribonuclease subunit B (1171 aa).

Residues 1–287 enclose the UvrD-like helicase ATP-binding domain; the sequence is MSLRFVIGRA…IPLMEQPRFH (287 aa). Residue 8–15 participates in ATP binding; that stretch reads GRAGSGKS. The UvrD-like helicase C-terminal domain maps to 281–587; the sequence is MEQPRFHSPA…QFANIPPSLD (307 aa). Residues cysteine 805, cysteine 1129, cysteine 1132, and cysteine 1138 each coordinate [4Fe-4S] cluster.

This sequence belongs to the helicase family. AddB/RexB type 1 subfamily. As to quaternary structure, heterodimer of AddA and AddB. Requires Mg(2+) as cofactor. It depends on [4Fe-4S] cluster as a cofactor.

In terms of biological role, the heterodimer acts as both an ATP-dependent DNA helicase and an ATP-dependent, dual-direction single-stranded exonuclease. Recognizes the chi site generating a DNA molecule suitable for the initiation of homologous recombination. The AddB subunit has 5' -&gt; 3' nuclease activity but not helicase activity. In Bacillus cereus (strain G9842), this protein is ATP-dependent helicase/deoxyribonuclease subunit B.